Consider the following 236-residue polypeptide: Large ribosomal subunit protein uL1 (236 aa).

It belongs to the universal ribosomal protein uL1 family. Part of the 50S ribosomal subunit.

Functionally, binds directly to 23S rRNA. The L1 stalk is quite mobile in the ribosome, and is involved in E site tRNA release. Protein L1 is also a translational repressor protein, it controls the translation of the L11 operon by binding to its mRNA. The polypeptide is Large ribosomal subunit protein uL1 (Heliobacterium modesticaldum (strain ATCC 51547 / Ice1)).